A 229-amino-acid chain; its full sequence is Dephospho-CoA kinase domain-containing protein (229 aa).

Residues 3–207 (LVGLTGGIAS…DCMQFLIIRA (205 aa)) enclose the DPCK domain. 8–15 (GGIASGKS) lines the ATP pocket.

Belongs to the CoaE family.

The protein is Dephospho-CoA kinase domain-containing protein (dcakd) of Danio rerio (Zebrafish).